A 213-amino-acid chain; its full sequence is Cytokinin riboside 5'-monophosphate phosphoribohydrolase LOG1 (213 aa).

Substrate contacts are provided by residues Glu-78, 96 to 97 (RK), 113 to 119 (GYGTLEE), and Thr-125.

Belongs to the LOG family. Expressed in roots and shoots. Detected in the vascular tissues of roots, cotyledons, leaves and pistils, in the shoot apical meristem and in immature flowers.

The protein resides in the cytoplasm. Its subcellular location is the nucleus. It catalyses the reaction N(6)-(dimethylallyl)adenosine 5'-phosphate + H2O = N(6)-dimethylallyladenine + D-ribose 5-phosphate. It carries out the reaction 9-ribosyl-trans-zeatin 5'-phosphate + H2O = trans-zeatin + D-ribose 5-phosphate. In terms of biological role, cytokinin-activating enzyme working in the direct activation pathway. Phosphoribohydrolase that converts inactive cytokinin nucleotides to the biologically active free-base forms. This chain is Cytokinin riboside 5'-monophosphate phosphoribohydrolase LOG1 (LOG1), found in Arabidopsis thaliana (Mouse-ear cress).